A 560-amino-acid polypeptide reads, in one-letter code: MAFSDLLEQVGSTGRFQVLHVTLLSMPILMMASHNLLQNFVAAVPPHHCQPHANLSMSSTDAVDVLRATVPLGLNGKLERCKRYTTPQWQILSLNTSESLWDESMAETETQSCEDGWFYNMTEMSSTIITEWDLVCDYRALKQMSQTTYMGGVLVGAIVFGGLSDRFGRRVLLLISNLMMAIGGTCVAFSTSFTMFCVFRVCCGMALSGLVLNSFSLIVEWIPTRVRTVVGTGTGYCYTTGQLILAAVAYCIRDWRWLTLAVSLPFYVSFLYSWWFLESARWLVLTKNPEQAVKNLKTVARINGRSAEGDKIDLEMLQESMKKEMACSKGSYSALDLLRTSTMRTITICLSAVWFSTSFAYYGLSMDLQKFGVSIYLIQIIFGAVDIPAKIIVTICMSMLGRRPSQCGALVLAGIMILINLLVPSDLQMLRTSLAVIGKGCLAASFNCCYLYAGELYPTVIRQSGMGWVSMMARFGAMVAPMVLLLGDDYPWIPGFIYGGAPIVSGIFAFFLPETLSQPLPDTIQDIDDRGLARTNSKRLPEKLDLAMKDPSCVLLKESV.

Topologically, residues 1-15 are cytoplasmic; the sequence is MAFSDLLEQVGSTGR. The helical transmembrane segment at 16–36 threads the bilayer; sequence FQVLHVTLLSMPILMMASHNL. The Extracellular portion of the chain corresponds to 37 to 143; the sequence is LQNFVAAVPP…LVCDYRALKQ (107 aa). A helical membrane pass occupies residues 144-164; it reads MSQTTYMGGVLVGAIVFGGLS. Residues 165 to 170 are Cytoplasmic-facing; sequence DRFGRR. The chain crosses the membrane as a helical span at residues 171-191; the sequence is VLLLISNLMMAIGGTCVAFST. The Extracellular segment spans residues 192–201; that stretch reads SFTMFCVFRV. Residues 202–222 traverse the membrane as a helical segment; sequence CCGMALSGLVLNSFSLIVEWI. At 223–228 the chain is on the cytoplasmic side; that stretch reads PTRVRT. The chain crosses the membrane as a helical span at residues 229-249; that stretch reads VVGTGTGYCYTTGQLILAAVA. Residues 250–256 are Extracellular-facing; sequence YCIRDWR. A helical membrane pass occupies residues 257–277; that stretch reads WLTLAVSLPFYVSFLYSWWFL. The Cytoplasmic segment spans residues 278–345; it reads ESARWLVLTK…DLLRTSTMRT (68 aa). Residues 346–366 form a helical membrane-spanning segment; the sequence is ITICLSAVWFSTSFAYYGLSM. Residues 367–374 are Extracellular-facing; sequence DLQKFGVS. A helical transmembrane segment spans residues 375–395; it reads IYLIQIIFGAVDIPAKIIVTI. Topologically, residues 396–406 are cytoplasmic; sequence CMSMLGRRPSQ. The helical transmembrane segment at 407–427 threads the bilayer; it reads CGALVLAGIMILINLLVPSDL. The Extracellular segment spans residues 428 to 433; it reads QMLRTS. Residues 434 to 454 traverse the membrane as a helical segment; it reads LAVIGKGCLAASFNCCYLYAG. Residues 455-465 are Cytoplasmic-facing; sequence ELYPTVIRQSG. The helical transmembrane segment at 466–486 threads the bilayer; sequence MGWVSMMARFGAMVAPMVLLL. Topologically, residues 487–491 are extracellular; it reads GDDYP. The chain crosses the membrane as a helical span at residues 492-512; sequence WIPGFIYGGAPIVSGIFAFFL. The Cytoplasmic portion of the chain corresponds to 513–560; sequence PETLSQPLPDTIQDIDDRGLARTNSKRLPEKLDLAMKDPSCVLLKESV.

This sequence belongs to the major facilitator (TC 2.A.1) superfamily. Organic cation transporter (TC 2.A.1.19) family. In terms of processing, glycosylated. Glycosylation is necessary for proper targeting of the transporter to the plasma membrane.

It is found in the cell membrane. The protein localises to the basolateral cell membrane. It localises to the basal cell membrane. Functionally, involved in the renal elimination of endogenous and exogenous organic anions. Functions as organic anion exchanger when the uptake of one molecule of organic anion is coupled with an efflux of one molecule of endogenous dicarboxylic acid (glutarate, ketoglutarate, etc). Mediates the sodium-independent uptake of p-aminohippurate (PAH), 2,3-dimercapto-1-propanesulfonic acid (DMPS), cidofovir, adefovir, 9-(2-phosphonylmethoxyethyl) guanine (PMEG), 9-(2-phosphonylmethoxyethyl) diaminopurine (PMEDAP), ochratoxin (OTA), acyclovir (ACV), 3'-azido-3-'deoxythymidine (AZT), cimetidine (CMD), 2,4-dichloro-phenoxyacetate (2,4-D), hippurate (HA), indoleacetate (IA), indoxyl sulfate (IS) and 3-carboxy-4-methyl-5-propyl-2-furanpropionate (CMPF) and edaravone sulfate. PAH uptake is inhibited by p-chloromercuribenzenesulphonate (PCMBS), diethyl pyrocarbonate (DEPC), indomethacin, sulindac, diclofenac, carprofen, okadaic acid, benzothiazolylcysteine (BTC), S-chlorotrifluoroethylcysteine (CTFC), cysteine S-conjugates S-dichlorovinylcysteine (DCVC), furosemide, steviol, phorbol 12-myristate 13-acetate (PMA), calcium ionophore A23187, benzylpenicillin, bumetamide, losartan, probenecid, phenol red, urate, glutarate and alpha-ketoglutarate. The chain is Solute carrier family 22 member 6 (slc22a6) from Danio rerio (Zebrafish).